The chain runs to 87 residues: Cell division topological specificity factor (87 aa).

Belongs to the MinE family.

Its function is as follows. Prevents the cell division inhibition by proteins MinC and MinD at internal division sites while permitting inhibition at polar sites. This ensures cell division at the proper site by restricting the formation of a division septum at the midpoint of the long axis of the cell. The polypeptide is Cell division topological specificity factor (Neisseria gonorrhoeae (strain ATCC 700825 / FA 1090)).